We begin with the raw amino-acid sequence, 342 residues long: 11-beta-hydroxysteroid dehydrogenase-like 6 (342 aa).

A helical; Signal-anchor for type II membrane protein transmembrane segment spans residues 10–30 (FLFPLLTLYALLVFYPTYQRL). Residues 54-80 (GAAS…VDIR) and Asp105 contribute to the NADP(+) site. Ser184 is a binding site for substrate. The active-site Proton acceptor is the Tyr197. Residues 197–201 (YCASK) and Lys201 each bind NADP(+).

This sequence belongs to the short-chain dehydrogenases/reductases (SDR) family.

The protein resides in the membrane. The polypeptide is 11-beta-hydroxysteroid dehydrogenase-like 6 (HSD6) (Arabidopsis thaliana (Mouse-ear cress)).